We begin with the raw amino-acid sequence, 475 residues long: Ribulose bisphosphate carboxylase large chain (475 aa).

A propeptide spanning residues 1–2 (MS) is cleaved from the precursor. P3 carries the post-translational modification N-acetylproline. Residue K14 is modified to N6,N6,N6-trimethyllysine. Substrate is bound by residues N123 and T173. K175 (proton acceptor) is an active-site residue. Residue K177 coordinates substrate. Mg(2+) is bound by residues K201, D203, and E204. K201 carries the post-translational modification N6-carboxylysine. Catalysis depends on H294, which acts as the Proton acceptor. Residues R295, H327, and S379 each coordinate substrate.

Belongs to the RuBisCO large chain family. Type I subfamily. In terms of assembly, heterohexadecamer of 8 large chains and 8 small chains; disulfide-linked. The disulfide link is formed within the large subunit homodimers. The cofactor is Mg(2+). Post-translationally, the disulfide bond which can form in the large chain dimeric partners within the hexadecamer appears to be associated with oxidative stress and protein turnover.

It is found in the plastid. The protein resides in the chloroplast. The enzyme catalyses 2 (2R)-3-phosphoglycerate + 2 H(+) = D-ribulose 1,5-bisphosphate + CO2 + H2O. It catalyses the reaction D-ribulose 1,5-bisphosphate + O2 = 2-phosphoglycolate + (2R)-3-phosphoglycerate + 2 H(+). Functionally, ruBisCO catalyzes two reactions: the carboxylation of D-ribulose 1,5-bisphosphate, the primary event in carbon dioxide fixation, as well as the oxidative fragmentation of the pentose substrate in the photorespiration process. Both reactions occur simultaneously and in competition at the same active site. This chain is Ribulose bisphosphate carboxylase large chain, found in Pinus edulis (Pinyon pine).